The sequence spans 283 residues: Thymidylate synthase (283 aa).

Arginine 22 lines the dUMP pocket. Cysteine 160 (nucleophile) is an active-site residue. DUMP contacts are provided by residues 180 to 183, asparagine 191, and 221 to 223; these read RSCD and HIY. Aspartate 183 contacts (6R)-5,10-methylene-5,6,7,8-tetrahydrofolate. Residue serine 282 coordinates (6R)-5,10-methylene-5,6,7,8-tetrahydrofolate.

The protein belongs to the thymidylate synthase family. Bacterial-type ThyA subfamily. Homodimer.

The protein resides in the cytoplasm. The catalysed reaction is dUMP + (6R)-5,10-methylene-5,6,7,8-tetrahydrofolate = 7,8-dihydrofolate + dTMP. The protein operates within pyrimidine metabolism; dTTP biosynthesis. Its function is as follows. Catalyzes the reductive methylation of 2'-deoxyuridine-5'-monophosphate (dUMP) to 2'-deoxythymidine-5'-monophosphate (dTMP) while utilizing 5,10-methylenetetrahydrofolate (mTHF) as the methyl donor and reductant in the reaction, yielding dihydrofolate (DHF) as a by-product. This enzymatic reaction provides an intracellular de novo source of dTMP, an essential precursor for DNA biosynthesis. This is Thymidylate synthase from Vibrio vulnificus (strain YJ016).